The following is a 501-amino-acid chain: Orsellinic acid/F9775 biosynthesis cluster protein D (501 aa).

A disordered region spans residues 137-189 (EVTPTTEDEDDEENESENDEEEGDVDLEEQEDDNGGRQSTTVTTSPGPSAPSV). Residues 142 to 169 (TEDEDDEENESENDEEEGDVDLEEQEDD) show a composition bias toward acidic residues. Polar residues predominate over residues 172-183 (GRQSTTVTTSPG).

Functionally, part of the gene cluster that mediates the biosynthesis of orsellinic acid, as well as of the cathepsin K inhibitors F9775 A and F9775 B. The non-reducing polyketide synthase orsA produces orsellinic acid by condensing acetyl-CoA with 3 malonyl-CoA units. Further modifications by the decarboxylase orsB and the tyrosinase-like protein orsC lead to the production of F9775 A and F9775 B. The functions of orsD and orsE remain unclear since only orsB and orsC are required to convert orsellinic acid into F9775 A and F9775 B. The protein is Orsellinic acid/F9775 biosynthesis cluster protein D of Emericella nidulans (strain FGSC A4 / ATCC 38163 / CBS 112.46 / NRRL 194 / M139) (Aspergillus nidulans).